Reading from the N-terminus, the 408-residue chain is Succinylornithine transaminase (408 aa).

Position 252 is an N6-(pyridoxal phosphate)lysine (Lys252).

It belongs to the class-III pyridoxal-phosphate-dependent aminotransferase family. AstC subfamily. Requires pyridoxal 5'-phosphate as cofactor.

It catalyses the reaction N(2)-succinyl-L-ornithine + 2-oxoglutarate = N-succinyl-L-glutamate 5-semialdehyde + L-glutamate. It functions in the pathway amino-acid degradation; L-arginine degradation via AST pathway; L-glutamate and succinate from L-arginine: step 3/5. Its function is as follows. Catalyzes the transamination of N(2)-succinylornithine and alpha-ketoglutarate into N(2)-succinylglutamate semialdehyde and glutamate. Can also act as an acetylornithine aminotransferase. This Salmonella newport (strain SL254) protein is Succinylornithine transaminase.